The primary structure comprises 503 residues: Ferulic acid decarboxylase 1 (503 aa).

Residues N170, H193, and E236 each coordinate Mn(2+). Prenylated FMN-binding positions include 170 to 175 (NWSIAR), 192 to 193 (QH), and E236. E285 (proton donor) is an active-site residue. Residue K394 coordinates prenylated FMN.

The protein belongs to the UbiD family. UbiD-like/FDC subfamily. Homodimer. May form higher order oligomers. Mn(2+) serves as cofactor. It depends on prenylated FMN as a cofactor.

Its subcellular location is the cytoplasm. The catalysed reaction is (E)-4-coumarate + H(+) = 4-vinylphenol + CO2. It carries out the reaction (E)-cinnamate + H(+) = styrene + CO2. It catalyses the reaction (E)-ferulate + H(+) = 2-methoxy-4-vinylphenol + CO2. Its function is as follows. Catalyzes the reversible decarboxylation of aromatic carboxylic acids like ferulic acid, p-coumaric acid or cinnamic acid, producing the corresponding vinyl derivatives 4-vinylphenol, 4-vinylguaiacol, and styrene, respectively, which play the role of aroma metabolites. Not essential for ubiquinone synthesis. The chain is Ferulic acid decarboxylase 1 from Saccharomyces cerevisiae (strain ATCC 204508 / S288c) (Baker's yeast).